Reading from the N-terminus, the 733-residue chain is MMRRPWLLSALVAWVKLPSVQGEDLFSLGEIDGSLLNGASDACVAAINTKVSCPSTLGLLHFDSDMELDTAEIKELCQGSCLTSLADLRDSVKRTCGSEVTFEDPVSGALWKASYLMEEAIYYAERACLRKGNGQYCNTWFQSAPADASLCDECYKLILWHNAQSPLSEDTSEQKEIYTSASSSCGYKKQPTQTYPPLLVSSPMATPSCSSEYTIKTGDTFLSVSESQRVSTHDLATANRLDSLVSDFPSSGKLCIRNQCDVYVVKSGDTCESIQSENGLSKARLRSWNPFINGYCDNISSYVNQTICISNPLGDYKVPENQDAAGFDTPAAVPDNIAPNTTTNCGLFHNVTAGDDCGTIGLKYSISLDDFIFLNSMIWPNCTNLWLRASYCVAPVGDIADYPGYGPEEDEWTIEPQESTEIAEIPHIGWLNDSRPYVPLANSTREDCWEYLWWNETYAGSPISCREAALGYELDLEQFFLWNPSLDQNEPDAVSPTYDFPCTISPFVSYCMQLASPTPVPKTPRVPPSPRAAGEIANCTRWFMGYFDCASQLSLSRMTMEKMYRYNPSLKEDCSGYTLGTFYCHETLDDLYHYDDALYGDDETSPITSSAPTSTTASSKTSSSAAQPTNVSTDGTCGGAKGKTCLNSAFGDCCSSSGYCGDSLPYCGGGCQSKFGKCDAGSEKISPDGTCGGDKEYTCEGSQFGDCCSQYGYCGRATDNCGKGCQKQYGVCT.

The first 22 residues, M1–G22, serve as a signal peptide directing secretion. LysM domains are found at residues S211 to I256 and D261 to I309. 9 N-linked (GlcNAc...) asparagine glycosylation sites follow: N298, N304, N340, N350, N381, N432, N442, N455, and N538. Positions L347 to V393 constitute a LysM 3 domain. Low complexity predominate over residues S605 to T629. A disordered region spans residues S605–C637. A glycan (N-linked (GlcNAc...) asparagine) is linked at N630. Chitin-binding type-1 domains follow at residues D634 to A680 and D688 to T733. Cystine bridges form between C637/C654, C645/C660, C653/C667, C671/C678, C691/C708, C699/C714, C707/C721, and C725/C732.

The protein belongs to the secreted LysM effector family.

It is found in the secreted. Its subcellular location is the cell membrane. The protein localises to the vacuole. Functionally, secreted effector that enables the plant pathogenic fungus to manipulate host defenses for successful infection. Not involved in host recognition and penetration but suppresses host cell death and promotes fumonisin biosynthesis while the pathogen colonizes maize kernels. This is Non-secreted LysM effector LCP1 from Gibberella moniliformis (strain M3125 / FGSC 7600) (Maize ear and stalk rot fungus).